We begin with the raw amino-acid sequence, 87 residues long: Large ribosomal subunit protein bL27 (87 aa).

Residues 1–21 are disordered; sequence MAHKKAGGSSRNGRDSESKRL.

The protein belongs to the bacterial ribosomal protein bL27 family.

The polypeptide is Large ribosomal subunit protein bL27 (Aromatoleum aromaticum (strain DSM 19018 / LMG 30748 / EbN1) (Azoarcus sp. (strain EbN1))).